The chain runs to 200 residues: Large ribosomal subunit protein bL25 (200 aa).

This sequence belongs to the bacterial ribosomal protein bL25 family. CTC subfamily. In terms of assembly, part of the 50S ribosomal subunit; part of the 5S rRNA/L5/L18/L25 subcomplex. Contacts the 5S rRNA. Binds to the 5S rRNA independently of L5 and L18.

This is one of the proteins that binds to the 5S RNA in the ribosome where it forms part of the central protuberance. This Nocardia farcinica (strain IFM 10152) protein is Large ribosomal subunit protein bL25.